The sequence spans 340 residues: Mitotic checkpoint protein BUB3.1 (340 aa).

Residues Met1–Ile20 are disordered. WD repeat units follow at residues Pro15–Glu54, Thr96–Arg135, Leu142–Gln179, Asp239–Gln278, and Lys281–Asn324.

The protein belongs to the WD repeat BUB3 family. In terms of assembly, part of the mitotic checkpoint complex (MCC); interacts with CDC20-1 and CDC20-2. Interacts with MAD2 and BUBR1. As to expression, expressed in actively dividing tissues, early in organ development, in young leaves, lateral root primordia and root meristems, flower buds, flowers and siliques.

Its subcellular location is the nucleus. It is found in the chromosome. It localises to the centromere. The protein localises to the kinetochore. The protein resides in the cytoplasm. Its subcellular location is the cytoskeleton. It is found in the phragmoplast. It localises to the spindle. In terms of biological role, has a dual function in spindle-assembly checkpoint signaling and in promoting the establishment of correct kinetochore-microtubule (K-MT) attachments. Promotes the formation of stable end-on bipolar attachments. Necessary for kinetochore localization of BUB1. The BUB1/BUB3 complex plays a role in the inhibition of anaphase-promoting complex or cyclosome (APC/C) when spindle-assembly checkpoint is activated and inhibits the ubiquitin ligase activity of APC/C by phosphorylating its activator CDC20. Essential for gametophyte development. The polypeptide is Mitotic checkpoint protein BUB3.1 (BUB3.1) (Arabidopsis thaliana (Mouse-ear cress)).